Here is a 241-residue protein sequence, read N- to C-terminus: LexA repressor (241 aa).

The segment at residues 41–61 (FREIGNAAGLKSPSSVKHQLQ) is a DNA-binding region (H-T-H motif). Active-site for autocatalytic cleavage activity residues include serine 165 and lysine 202.

This sequence belongs to the peptidase S24 family. As to quaternary structure, homodimer.

The enzyme catalyses Hydrolysis of Ala-|-Gly bond in repressor LexA.. Represses a number of genes involved in the response to DNA damage (SOS response), including recA and lexA. In the presence of single-stranded DNA, RecA interacts with LexA causing an autocatalytic cleavage which disrupts the DNA-binding part of LexA, leading to derepression of the SOS regulon and eventually DNA repair. The protein is LexA repressor of Bifidobacterium longum (strain DJO10A).